A 201-amino-acid polypeptide reads, in one-letter code: Large ribosomal subunit protein uL4 (201 aa).

The tract at residues 44 to 71 (RAQKTRAEVTGSGKKPWRQKGTGRARSG) is disordered.

The protein belongs to the universal ribosomal protein uL4 family. In terms of assembly, part of the 50S ribosomal subunit.

In terms of biological role, one of the primary rRNA binding proteins, this protein initially binds near the 5'-end of the 23S rRNA. It is important during the early stages of 50S assembly. It makes multiple contacts with different domains of the 23S rRNA in the assembled 50S subunit and ribosome. Its function is as follows. Forms part of the polypeptide exit tunnel. This is Large ribosomal subunit protein uL4 from Enterobacter sp. (strain 638).